The primary structure comprises 278 residues: Myb/SANT-like DNA-binding domain-containing protein 1 (278 aa).

Residues R44–I131 form the Myb-like domain. The tract at residues C139 to T167 is disordered. The segment covering P149 to S166 has biased composition (polar residues).

The polypeptide is Myb/SANT-like DNA-binding domain-containing protein 1 (Msantd1) (Mus musculus (Mouse)).